Reading from the N-terminus, the 281-residue chain is 2-dehydro-3-deoxyphosphooctonate aldolase (281 aa).

Belongs to the KdsA family.

The protein localises to the cytoplasm. The catalysed reaction is D-arabinose 5-phosphate + phosphoenolpyruvate + H2O = 3-deoxy-alpha-D-manno-2-octulosonate-8-phosphate + phosphate. It functions in the pathway carbohydrate biosynthesis; 3-deoxy-D-manno-octulosonate biosynthesis; 3-deoxy-D-manno-octulosonate from D-ribulose 5-phosphate: step 2/3. Its pathway is bacterial outer membrane biogenesis; lipopolysaccharide biosynthesis. In Hahella chejuensis (strain KCTC 2396), this protein is 2-dehydro-3-deoxyphosphooctonate aldolase.